Consider the following 729-residue polypeptide: Alpha-galactosidase AgaA (729 aa).

Residues Asp-53, Trp-199, 366–367 (DD), Arg-443, 476–480 (KWDMN), Cys-526, and Asp-548 each bind substrate. The Nucleophile role is filled by Asp-478. The Proton donor role is filled by Asp-548.

Belongs to the glycosyl hydrolase 36 family. Homotetramer.

The catalysed reaction is Hydrolysis of terminal, non-reducing alpha-D-galactose residues in alpha-D-galactosides, including galactose oligosaccharides, galactomannans and galactolipids.. Its activity is regulated as follows. Not inhibited by D-galactose or sucrose. Inhibited by pharmaceutical drug 1-deoxygalactonojirimycin. Functionally, hydrolyzes the short-chain alpha-galactosaccharides raffinose and stachyose. This is Alpha-galactosidase AgaA from Geobacillus stearothermophilus (Bacillus stearothermophilus).